Reading from the N-terminus, the 150-residue chain is L-alanine exporter AlaE (150 aa).

4 consecutive transmembrane segments (helical) span residues F17 to M37, L48 to L68, L86 to A106, and I111 to Y131.

This sequence belongs to the AlaE exporter family.

It localises to the cell inner membrane. Its function is as follows. Exports L-alanine. This Vibrio cholerae serotype O1 (strain ATCC 39315 / El Tor Inaba N16961) protein is L-alanine exporter AlaE.